We begin with the raw amino-acid sequence, 256 residues long: Methylesterase 9 (256 aa).

Ser-78 acts as the Acyl-ester intermediate in catalysis. Catalysis depends on charge relay system residues Asp-206 and His-234.

Belongs to the AB hydrolase superfamily. Methylesterase family.

It carries out the reaction methyl (indol-3-yl)acetate + H2O = (indol-3-yl)acetate + methanol + H(+). The catalysed reaction is methyl (-)-jasmonate + H2O = jasmonate + methanol + H(+). The enzyme catalyses methyl salicylate + H2O = salicylate + methanol + H(+). Its pathway is plant hormone biosynthesis. It functions in the pathway lipid metabolism; oxylipin biosynthesis. Its activity is regulated as follows. Esterase activity is down-regulated by salicylic acid (SA). Methylesterase shown to have carboxylesterase activity, methyl indole-3-acetic acid (MeIAA) esterase activity, methyl salicylate (MeSA) esterase activity and methyl jasmonate (MeJA) esterase activity in vitro. Required to convert methyl salicylate (MeSA) to salicylic acid (SA) as part of the signal transduction pathways that activate systemic acquired resistance in systemic tissue. MeSA is believed to be an inactive form that needs to be demethylated to exert a biological effect. The protein is Methylesterase 9 of Arabidopsis thaliana (Mouse-ear cress).